A 375-amino-acid chain; its full sequence is 23S rRNA (uracil(747)-C(5))-methyltransferase RlmC (375 aa).

[4Fe-4S] cluster contacts are provided by C3, C11, C14, and C87. The S-adenosyl-L-methionine site is built by Q212, F241, E262, and N307. The Nucleophile role is filled by C334.

The protein belongs to the class I-like SAM-binding methyltransferase superfamily. RNA M5U methyltransferase family. RlmC subfamily.

It carries out the reaction uridine(747) in 23S rRNA + S-adenosyl-L-methionine = 5-methyluridine(747) in 23S rRNA + S-adenosyl-L-homocysteine + H(+). In terms of biological role, catalyzes the formation of 5-methyl-uridine at position 747 (m5U747) in 23S rRNA. This chain is 23S rRNA (uracil(747)-C(5))-methyltransferase RlmC, found in Salmonella dublin (strain CT_02021853).